The sequence spans 1010 residues: Trifunctional purine biosynthetic protein adenosine-3 (1010 aa).

Ala-2 is subject to N-acetylalanine. The residue at position 10 (Ser-10) is a Phosphoserine. Positions 111 to 318 (KEFMDRHGIP…LYEVIQSTLD (208 aa)) constitute an ATP-grasp domain. Residues 190–193 (EELL), Glu-197, Arg-220, and Asn-229 each bind ATP. Mg(2+) contacts are provided by Glu-288 and Asn-290. Position 350 is an N6-acetyllysine (Lys-350). Residues 434–809 (SLTYKESGVD…HFSFEKKKAR (376 aa)) form an AIRS domain region. The residue at position 440 (Ser-440) is a Phosphoserine. At Thr-682 the chain carries Phosphothreonine. Phosphoserine is present on residues Ser-796 and Ser-802. The segment at 810–1010 (VAVLISGTGS…NGKICWVKEE (201 aa)) is GART domain. N(1)-(5-phospho-beta-D-ribosyl)glycinamide is bound at residue 818–820 (GSN). (6R)-10-formyltetrahydrofolate-binding positions include Arg-871, 896–899 (MRIL), and Asn-913. Catalysis depends on His-915, which acts as the Proton donor. (6R)-10-formyltetrahydrofolate is bound at residue 947-951 (AEDVD). 977–980 (KLAE) is a binding site for N(1)-(5-phospho-beta-D-ribosyl)glycinamide.

This sequence in the N-terminal section; belongs to the GARS family. It in the central section; belongs to the AIR synthase family. The protein in the C-terminal section; belongs to the GART family. In terms of assembly, homodimer. Mg(2+) serves as cofactor. Requires Mn(2+) as cofactor.

It catalyses the reaction 5-phospho-beta-D-ribosylamine + glycine + ATP = N(1)-(5-phospho-beta-D-ribosyl)glycinamide + ADP + phosphate + H(+). The catalysed reaction is N(1)-(5-phospho-beta-D-ribosyl)glycinamide + (6R)-10-formyltetrahydrofolate = N(2)-formyl-N(1)-(5-phospho-beta-D-ribosyl)glycinamide + (6S)-5,6,7,8-tetrahydrofolate + H(+). It carries out the reaction 2-formamido-N(1)-(5-O-phospho-beta-D-ribosyl)acetamidine + ATP = 5-amino-1-(5-phospho-beta-D-ribosyl)imidazole + ADP + phosphate + H(+). Its pathway is purine metabolism; IMP biosynthesis via de novo pathway; 5-amino-1-(5-phospho-D-ribosyl)imidazole from N(2)-formyl-N(1)-(5-phospho-D-ribosyl)glycinamide: step 2/2. It participates in purine metabolism; IMP biosynthesis via de novo pathway; N(1)-(5-phospho-D-ribosyl)glycinamide from 5-phospho-alpha-D-ribose 1-diphosphate: step 2/2. It functions in the pathway purine metabolism; IMP biosynthesis via de novo pathway; N(2)-formyl-N(1)-(5-phospho-D-ribosyl)glycinamide from N(1)-(5-phospho-D-ribosyl)glycinamide (10-formyl THF route): step 1/1. Its function is as follows. Trifunctional enzyme that catalyzes three distinct reactions as part of the 'de novo' inosine monophosphate biosynthetic pathway. The polypeptide is Trifunctional purine biosynthetic protein adenosine-3 (GART) (Homo sapiens (Human)).